The sequence spans 148 residues: General odorant-binding protein 69a (148 aa).

The first 23 residues, 1-23 (MVARHFSFFLALLILYDLIPSNQ), serve as a signal peptide directing secretion. Intrachain disulfides connect C42-C74, C70-C121, and C112-C130.

Belongs to the PBP/GOBP family. In terms of tissue distribution, expressed in the antenna, mostly on the anterior surface of the third antennal segment. Expressed in auxiliary cells and the third antennal segment and exported to the sensillar lymph (at protein level).

It is found in the secreted. Odorant-binding protein required for olfactory behavior and activity of pheromone-sensitive neurons in response to the male-specific pheromone cis-vaccenyl acetate (cVA). Modulates social responsivity differently in males and females, regulating male aggression and female receptivity respectively. The polypeptide is General odorant-binding protein 69a (Obp69a) (Drosophila melanogaster (Fruit fly)).